A 390-amino-acid polypeptide reads, in one-letter code: Dual-specificity RNA methyltransferase RlmN (390 aa).

Glu-111 functions as the Proton acceptor in the catalytic mechanism. Residues 117 to 356 (EDDRATLCVS…VIVRKTRGDD (240 aa)) enclose the Radical SAM core domain. Cys-124 and Cys-361 are oxidised to a cystine. Residues Cys-131, Cys-135, and Cys-138 each contribute to the [4Fe-4S] cluster site. Residues 185 to 186 (GE), Ser-217, 239 to 241 (SLH), and Asn-318 each bind S-adenosyl-L-methionine. The active-site S-methylcysteine intermediate is Cys-361.

Belongs to the radical SAM superfamily. RlmN family. [4Fe-4S] cluster is required as a cofactor.

The protein localises to the cytoplasm. The enzyme catalyses adenosine(2503) in 23S rRNA + 2 reduced [2Fe-2S]-[ferredoxin] + 2 S-adenosyl-L-methionine = 2-methyladenosine(2503) in 23S rRNA + 5'-deoxyadenosine + L-methionine + 2 oxidized [2Fe-2S]-[ferredoxin] + S-adenosyl-L-homocysteine. It catalyses the reaction adenosine(37) in tRNA + 2 reduced [2Fe-2S]-[ferredoxin] + 2 S-adenosyl-L-methionine = 2-methyladenosine(37) in tRNA + 5'-deoxyadenosine + L-methionine + 2 oxidized [2Fe-2S]-[ferredoxin] + S-adenosyl-L-homocysteine. Its function is as follows. Specifically methylates position 2 of adenine 2503 in 23S rRNA and position 2 of adenine 37 in tRNAs. m2A2503 modification seems to play a crucial role in the proofreading step occurring at the peptidyl transferase center and thus would serve to optimize ribosomal fidelity. The sequence is that of Dual-specificity RNA methyltransferase RlmN from Edwardsiella ictaluri (strain 93-146).